A 1138-amino-acid chain; its full sequence is Exportin-6-B (1138 aa).

The region spanning 31 to 97 (IESLLNNFAQ…RSSLPKLLLS (67 aa)) is the Importin N-terminal domain. A compositionally biased stretch (low complexity) spans 291–307 (SVTTNTTSSVVNGGSSS). A disordered region spans residues 291–315 (SVTTNTTSSVVNGGSSSPPLHSAAP).

This sequence belongs to the exportin family.

The protein localises to the nucleus. The protein resides in the cytoplasm. Its function is as follows. Mediates the nuclear export of actin and profilin-actin complexes in somatic cells. Oocyte nuclei lack active actin export. Functionally, mediates the nuclear export of actin and profilin-actin complexes in somatic cells. The sequence is that of Exportin-6-B (xpo6-b) from Xenopus laevis (African clawed frog).